The chain runs to 309 residues: Testis-expressed protein 264 homolog (309 aa).

At 1 to 3 (MPD) the chain is on the lumenal side. A helical; Signal-anchor for type III membrane protein transmembrane segment spans residues 4-24 (LLLLGLIGALTLLLLLTLLAF). Residues 25-309 (AGYSGLLTGV…ELSTPERGEE (285 aa)) lie on the Cytoplasmic side of the membrane. Positions 193–309 (PEVKETERKC…ELSTPERGEE (117 aa)) are disordered. Positions 208-225 (ATDTQTDGTGADTSDASS) are enriched in low complexity. Ser238 and Ser243 each carry phosphoserine. A compositionally biased stretch (basic and acidic residues) spans 250 to 262 (GWDDGDNRSEHSY). Low complexity predominate over residues 263–272 (SESGASGSSF). Residues 272–275 (FEEL) carry the LIR motif motif.

Interacts (via the LIR motif) with ATG8 family proteins MAP1LC3A, MAP1LC3B, GABARAP and GABARAPL1. Interacts with VCP/p97; bridging VCP/p97 to covalent DNA-protein cross-links (DPCs). Interacts with TOP1 (when sumoylated).

It is found in the endoplasmic reticulum membrane. The protein resides in the cytoplasmic vesicle. It localises to the autophagosome. The protein localises to the cytoplasm. Its subcellular location is the cytosol. It is found in the nucleus. The protein resides in the chromosome. In terms of biological role, major reticulophagy (also called ER-phagy) receptor that acts independently of other candidate reticulophagy receptors to remodel subdomains of the endoplasmic reticulum into autophagosomes upon nutrient stress, which then fuse with lysosomes for endoplasmic reticulum turnover. The ATG8-containing isolation membrane (IM) cradles a tubular segment of TEX264-positive ER near a three-way junction, allowing the formation of a synapse of 2 juxtaposed membranes with trans interaction between the TEX264 and ATG8 proteins. Expansion of the IM would extend the capture of ER, possibly through a 'zipper-like' process involving continued trans TEX264-ATG8 interactions, until poorly understood mechanisms lead to the fission of relevant membranes and, ultimately, autophagosomal membrane closure. Also involved in the repair of covalent DNA-protein cross-links (DPCs) during DNA synthesis: acts by bridging VCP/p97 to covalent DNA-protein cross-links (DPCs) and initiating resolution of DPCs by SPRTN. This Mus musculus (Mouse) protein is Testis-expressed protein 264 homolog.